The chain runs to 684 residues: Endo-1,4-beta-xylanase A (684 aa).

An N-terminal signal peptide occupies residues 1 to 34 (MMRSLKSRKLVFILAMLFLINAIVSLKFITYSSA). CBM-cenC domains lie at 40–190 (KSKY…IKDL) and 193–342 (AYVL…ISDE). The 329-residue stretch at 350 to 678 (DYNLPSLCEK…KFAFWSLIDP (329 aa)) folds into the GH10 domain. The Proton donor role is filled by Glu-490. The active-site Nucleophile is the Glu-598.

This sequence belongs to the glycosyl hydrolase 10 (cellulase F) family.

It catalyses the reaction Endohydrolysis of (1-&gt;4)-beta-D-xylosidic linkages in xylans.. It participates in glycan degradation; xylan degradation. The sequence is that of Endo-1,4-beta-xylanase A (xynA) from Caldicellulosiruptor sp. (strain Rt8B.4).